Here is a 309-residue protein sequence, read N- to C-terminus: Aspartate carbamoyltransferase catalytic subunit (309 aa).

The carbamoyl phosphate site is built by Arg57 and Thr58. An L-aspartate-binding site is contributed by Lys86. Arg107, His135, and Gln138 together coordinate carbamoyl phosphate. Arg168 and Arg229 together coordinate L-aspartate. Residues Leu269 and Pro270 each coordinate carbamoyl phosphate.

Belongs to the aspartate/ornithine carbamoyltransferase superfamily. ATCase family. Heterooligomer of catalytic and regulatory chains.

It catalyses the reaction carbamoyl phosphate + L-aspartate = N-carbamoyl-L-aspartate + phosphate + H(+). It participates in pyrimidine metabolism; UMP biosynthesis via de novo pathway; (S)-dihydroorotate from bicarbonate: step 2/3. Its function is as follows. Catalyzes the condensation of carbamoyl phosphate and aspartate to form carbamoyl aspartate and inorganic phosphate, the committed step in the de novo pyrimidine nucleotide biosynthesis pathway. The sequence is that of Aspartate carbamoyltransferase catalytic subunit from Methanopyrus kandleri (strain AV19 / DSM 6324 / JCM 9639 / NBRC 100938).